The primary structure comprises 93 residues: Small ribosomal subunit protein uS19 (93 aa).

The protein belongs to the universal ribosomal protein uS19 family.

In terms of biological role, protein S19 forms a complex with S13 that binds strongly to the 16S ribosomal RNA. The protein is Small ribosomal subunit protein uS19 of Geotalea daltonii (strain DSM 22248 / JCM 15807 / FRC-32) (Geobacter daltonii).